A 257-amino-acid polypeptide reads, in one-letter code: (R)-2-haloacid dehalogenase (257 aa).

Belongs to the HAD-like hydrolase superfamily. S-2-haloalkanoic acid dehalogenase family.

It carries out the reaction an (R)-2-haloacid + H2O = a (2S)-2-hydroxycarboxylate + a halide anion + H(+). Its function is as follows. Catalyzes the hydrolytic dehalogenation of small (R)-2-haloalkanoic acids to yield the corresponding (S)-2-hydroxyalkanoic acids. Acts on acids of short chain lengths, C(2) to C(4), with inversion of configuration at C-2. The protein is (R)-2-haloacid dehalogenase (dehI) of Rhizobium sp. (strain NHG3).